We begin with the raw amino-acid sequence, 466 residues long: ATP synthase subunit beta (466 aa).

Position 153–160 (153–160) interacts with ATP; that stretch reads GGAGVGKT.

It belongs to the ATPase alpha/beta chains family. In terms of assembly, F-type ATPases have 2 components, CF(1) - the catalytic core - and CF(0) - the membrane proton channel. CF(1) has five subunits: alpha(3), beta(3), gamma(1), delta(1), epsilon(1). CF(0) has three main subunits: a(1), b(2) and c(9-12). The alpha and beta chains form an alternating ring which encloses part of the gamma chain. CF(1) is attached to CF(0) by a central stalk formed by the gamma and epsilon chains, while a peripheral stalk is formed by the delta and b chains.

It localises to the cell membrane. The catalysed reaction is ATP + H2O + 4 H(+)(in) = ADP + phosphate + 5 H(+)(out). Produces ATP from ADP in the presence of a proton gradient across the membrane. The catalytic sites are hosted primarily by the beta subunits. This chain is ATP synthase subunit beta, found in Leuconostoc mesenteroides subsp. mesenteroides (strain ATCC 8293 / DSM 20343 / BCRC 11652 / CCM 1803 / JCM 6124 / NCDO 523 / NBRC 100496 / NCIMB 8023 / NCTC 12954 / NRRL B-1118 / 37Y).